The chain runs to 821 residues: Integrator complex assembly factor BRAT1 (821 aa).

Residues 100–200 (PGLFGEPGPL…WPACAQKIMD (101 aa)) are required for interaction with NDFIP1. HEAT repeat units lie at residues 495 to 531 (PQFLRELFPVLQKRLCHPCWEVRDSALEFLTQLSRHW) and 544 to 576 (SEVPQLALQLLQDPESYVRASAVTAMGQLSSQG). Residues 741 to 767 (GSPNTASAEATLPRWRAGEQAQPPGDQ) are disordered. S742 carries the post-translational modification Phosphoserine. The short motif at 819–821 (DCY) is the BRAT1-like motif element. Residue C820 coordinates Zn(2+).

It belongs to the BRAT1 family. Part of the multiprotein complex composed of BRAT1, WDR73, as well as integrator complex subunits INTS9 and INTS11. Interacts with BRCA1 and ATM. Interacts with MTOR and RPTOR. Interacts with NDFIP1. Interacts with SMC1A and PRKDC. Ubiquitinated by NEDD4, NEDD4L and ITCH; mono- and polyubiquitinated forms are detected. As to expression, ubiquitously expressed.

Its subcellular location is the nucleus. The protein localises to the cytoplasm. Its function is as follows. Component of a multiprotein complex required for the assembly of the RNA endonuclease module of the integrator complex. Associates with INTS9 and INTS11 in the cytoplasm and blocks the active site of INTS11 to inhibit the endonuclease activity of INTS11 before formation of the full integrator complex. Following dissociation of WDR73 of the complex, BRAT1 facilitates the nuclear import of the INTS9-INTS11 heterodimer. In the nucleus, INTS4 is integrated to the INTS9-INTS11 heterodimer and BRAT1 is released from the mature RNA endonuclease module by inositol hexakisphosphate (InsP6). BRAT1 is also involved in DNA damage response; activates kinases ATM, SMC1A and PRKDC by modulating their phosphorylation status following ionizing radiation (IR) stress. Plays a role in regulating mitochondrial function and cell proliferation. Required for protein stability of MTOR and MTOR-related proteins, and cell cycle progress by growth factors. This is Integrator complex assembly factor BRAT1 from Homo sapiens (Human).